Reading from the N-terminus, the 376-residue chain is Actin-related protein T1 (376 aa).

This sequence belongs to the actin family.

The protein resides in the cytoplasm. Its subcellular location is the cytoskeleton. It localises to the nucleus. The protein localises to the cytoplasmic vesicle. It is found in the secretory vesicle. The protein resides in the acrosome. In terms of biological role, negatively regulates the Hedgehog (SHH) signaling. Binds to the promoter of the SHH signaling mediator, GLI1, and inhibits its expression. The protein is Actin-related protein T1 (Actrt1) of Rattus norvegicus (Rat).